Consider the following 1226-residue polypeptide: Methionine synthase (1226 aa).

Residues 7 to 327 (KVQIEKQLSE…EHIRQMALVV (321 aa)) enclose the Hcy-binding domain. Zn(2+) is bound by residues Cys-249, Cys-312, and Cys-313. One can recognise a Pterin-binding domain in the interval 358-619 (FINVGERTNV…VPEDLREAVE (262 aa)). In terms of domain architecture, B12-binding N-terminal spans 652 to 746 (SALEWRDWPV…FINASKEVGA (95 aa)). Methylcob(III)alamin contacts are provided by residues Glu-696, 758-762 (GDVHD), His-761, Ser-806, Thr-810, and Ala-862. The 136-residue stretch at 748–883 (NGKILLATVK…SNELKPSFVE (136 aa)) folds into the B12-binding domain. Residues 899-1226 (KQPRTKPVTL…AEKWLGPNLN (328 aa)) enclose the AdoMet activation domain. S-adenosyl-L-methionine contacts are provided by residues Asp-949, Arg-1137, and 1192-1193 (YF).

Belongs to the vitamin-B12 dependent methionine synthase family. Requires methylcob(III)alamin as cofactor. It depends on Zn(2+) as a cofactor.

The catalysed reaction is (6S)-5-methyl-5,6,7,8-tetrahydrofolate + L-homocysteine = (6S)-5,6,7,8-tetrahydrofolate + L-methionine. The protein operates within amino-acid biosynthesis; L-methionine biosynthesis via de novo pathway; L-methionine from L-homocysteine (MetH route): step 1/1. In terms of biological role, catalyzes the transfer of a methyl group from methyl-cobalamin to homocysteine, yielding enzyme-bound cob(I)alamin and methionine. Subsequently, remethylates the cofactor using methyltetrahydrofolate. The protein is Methionine synthase (metH) of Aliivibrio fischeri (Vibrio fischeri).